Reading from the N-terminus, the 72-residue chain is Antitoxin VapB11 (72 aa).

Functionally, antitoxin component of a type II toxin-antitoxin (TA) system. This chain is Antitoxin VapB11 (vapB11), found in Mycobacterium tuberculosis (strain CDC 1551 / Oshkosh).